The chain runs to 269 residues: 3-methyl-2-oxobutanoate hydroxymethyltransferase (269 aa).

2 residues coordinate Mg(2+): aspartate 46 and aspartate 85. 3-methyl-2-oxobutanoate is bound by residues 46–47, aspartate 85, and lysine 114; that span reads DS. Mg(2+) is bound at residue glutamate 116. Glutamate 183 serves as the catalytic Proton acceptor.

It belongs to the PanB family. Homodecamer; pentamer of dimers. Mg(2+) is required as a cofactor.

The protein resides in the cytoplasm. The catalysed reaction is 3-methyl-2-oxobutanoate + (6R)-5,10-methylene-5,6,7,8-tetrahydrofolate + H2O = 2-dehydropantoate + (6S)-5,6,7,8-tetrahydrofolate. Its pathway is cofactor biosynthesis; (R)-pantothenate biosynthesis; (R)-pantoate from 3-methyl-2-oxobutanoate: step 1/2. In terms of biological role, catalyzes the reversible reaction in which hydroxymethyl group from 5,10-methylenetetrahydrofolate is transferred onto alpha-ketoisovalerate to form ketopantoate. In Methylococcus capsulatus (strain ATCC 33009 / NCIMB 11132 / Bath), this protein is 3-methyl-2-oxobutanoate hydroxymethyltransferase.